Reading from the N-terminus, the 199-residue chain is Small ribosomal subunit protein uS4 (199 aa).

An S4 RNA-binding domain is found at 94–157 (SRLDNIVYRM…QNVPTILASI (64 aa)).

This sequence belongs to the universal ribosomal protein uS4 family. Part of the 30S ribosomal subunit. Contacts protein S5. The interaction surface between S4 and S5 is involved in control of translational fidelity.

One of the primary rRNA binding proteins, it binds directly to 16S rRNA where it nucleates assembly of the body of the 30S subunit. Its function is as follows. With S5 and S12 plays an important role in translational accuracy. The chain is Small ribosomal subunit protein uS4 from Mycoplasma mobile (strain ATCC 43663 / 163K / NCTC 11711) (Mesomycoplasma mobile).